A 126-amino-acid chain; its full sequence is Acidic phospholipase A2 S1E6-a (126 aa).

An N-terminal signal peptide occupies residues 1-3 (VEG). Disulfide bonds link C29-C119, C31-C47, C46-C98, C52-C126, C53-C91, C60-C84, and C78-C89. Ca(2+) is bound by residues Y30, G32, and G34. Residue H50 is part of the active site. D51 lines the Ca(2+) pocket. D92 is an active-site residue.

As to quaternary structure, homodimer. Requires Ca(2+) as cofactor. As to expression, expressed by the venom gland.

The protein resides in the secreted. The enzyme catalyses a 1,2-diacyl-sn-glycero-3-phosphocholine + H2O = a 1-acyl-sn-glycero-3-phosphocholine + a fatty acid + H(+). Its function is as follows. Snake venom phospholipase A2 (PLA2) that inhibits ADP-induced platelet aggregation. PLA2 catalyzes the calcium-dependent hydrolysis of the 2-acyl groups in 3-sn-phosphoglycerides. The protein is Acidic phospholipase A2 S1E6-a of Calloselasma rhodostoma (Malayan pit viper).